The following is a 953-amino-acid chain: Homeobox protein LUMINIDEPENDENS (953 aa).

A DNA-binding region (homeobox) is located at residues 63–123 (KIGKRPRDLL…VTQKTRVRKQ (61 aa)). The tract at residues 404 to 430 (EQPGQKAAGKSPQTVRIGTSGRSRPMS) is disordered. Residues 414-425 (SPQTVRIGTSGR) are compositionally biased toward polar residues. A run of 5 repeats spans residues 498–502 (QPVNG), 507–511 (QPVNG), 516–520 (QPVNG), 525–529 (QPVNG), and 534–538 (QPVNG). A 5 X 5 AA repeats of Q-P-V-N-G region spans residues 498–538 (QPVNGFSTIQPVNGPSAVQPVNGPLAVQPVNGPSALQPVNG). 3 disordered regions span residues 606–668 (NSKE…EPQD), 733–763 (APNS…NPGM), and 861–953 (VGQM…KRWR). A compositionally biased stretch (basic and acidic residues) spans 608–623 (KEADVQRNRNRRERET). Positions 651 to 661 (PEIPSQQPPEE) are enriched in low complexity. Positions 733–742 (APNSSSSSNK) are enriched in polar residues. The segment covering 869–884 (SSSWRSQQSQNSYYSH) has biased composition (low complexity). Polar residues-rich tracts occupy residues 888-934 (EIAS…QQQA) and 942-953 (THPYWNQNKRWR).

In terms of assembly, interacts with SUF4. As to expression, expressed in shoot apex, root apex, leaf primordia and floral buds.

It is found in the nucleus. In terms of biological role, seems to play a role in the regulation of flowering time in the autonomous flowering pathway by repressing FLOWERING LOCUS C expression. The sequence is that of Homeobox protein LUMINIDEPENDENS (LD) from Arabidopsis thaliana (Mouse-ear cress).